A 226-amino-acid chain; its full sequence is Fibronectin type III domain-containing protein 10 (226 aa).

The first 20 residues, 1–20, serve as a signal peptide directing secretion; sequence MRAPPLLLLLAACAPPPCAA. The Extracellular portion of the chain corresponds to 21 to 182; the sequence is AAPTPPGWEP…FTAEPAGMQD (162 aa). The 93-residue stretch at 74 to 166 folds into the Fibronectin type-III domain; it reads PAGRSLRASV…PAAAAPETPE (93 aa). N-linked (GlcNAc...) asparagine glycans are attached at residues asparagine 86 and asparagine 109. Residues 183–203 form a helical membrane-spanning segment; the sequence is IVVAMTAVGGSICVMLVVICL. At 204-226 the chain is on the cytoplasmic side; sequence LVAYITENLMRPALARPGLRRHP.

The protein resides in the membrane. The chain is Fibronectin type III domain-containing protein 10 (FNDC10) from Homo sapiens (Human).